The sequence spans 252 residues: MEDKSLVTLKKKTFEVSKFSNLGAIELFVDGRRKRPKYFHRRRETVLNHVGGKKSEHKLDVFDQRDYKMIKSYAFLKIVGVQLVVTSHLPADTPGFIQIDLLDSRLTEKRKKGKTIQRFKARACDNCSVAQYKVEYSISTQENVLDVWKVGCISEGVPVCDGTYPFSIEVSLIWVATDSTRRLNVEELNSSDYIEGDFTDQEVFGEFMSLKQVEMKTIEAKYDGPYRPATTRPKSLLSSEDVKRASNKKNSS.

The interval 222-252 is disordered; the sequence is YDGPYRPATTRPKSLLSSEDVKRASNKKNSS.

The protein is 29 kDa protein of Beta vulgaris (Sugar beet).